The following is a 379-amino-acid chain: Cytochrome b (379 aa).

Helical transmembrane passes span 32–52 (YGSL…VLAT), 76–98 (WLLR…LHIG), 111–131 (VWNI…LGYV), and 177–197 (FFAL…LHIF). The heme b site is built by H82 and H96. 2 residues coordinate heme b: H181 and H195. H200 provides a ligand contact to a ubiquinone. 4 helical membrane passes run 223-243 (YSVK…VFTL), 287-304 (LGGV…FLFS), 320-340 (LARL…WLGS), and 348-367 (NEVA…TMCA).

This sequence belongs to the cytochrome b family. As to quaternary structure, the main subunits of complex b-c1 are: cytochrome b, cytochrome c1 and the Rieske protein. Heme b serves as cofactor.

The protein resides in the mitochondrion inner membrane. Its function is as follows. Component of the ubiquinol-cytochrome c reductase complex (complex III or cytochrome b-c1 complex) that is part of the mitochondrial respiratory chain. The b-c1 complex mediates electron transfer from ubiquinol to cytochrome c. Contributes to the generation of a proton gradient across the mitochondrial membrane that is then used for ATP synthesis. The protein is Cytochrome b (mt:Cyt-b) of Brachionus plicatilis (Marine rotifer).